The sequence spans 295 residues: MQIRMTEYQVPDPESGPYGITVCANGRIWFTEQKGNRIGMLTESGDITEYTIPTESAGASIITSGIDGELWFTEYKAGKIGKITPQGKITEYALPPGAAPFGIAAGCDDAMWYTDMAGHQIGRLSSSGEITEYKLPKPGAFPSFITRGADGALWFTQNQSGSIGRITADGDISEYPLPQEQSGPVGITAGPDGALWFTEINANQIGRITVSGKISEYQLPTAHARPHAIAAGGDGALWFTEWGAGQIGRITVDGDITEYPIPTADSEPHGIAAGSAHSIWFAEECGRIGKISIQN.

Histidine 227 contributes to the substrate binding site. A Mg(2+)-binding site is contributed by glutamate 267. Histidine 269 acts as the Proton acceptor in catalysis. A Mg(2+)-binding site is contributed by glutamate 284.

The protein belongs to the Vgb family. In terms of assembly, monomer. The cofactor is Mg(2+).

Its function is as follows. Inactivates the type B streptogramin antibiotics by linearizing the lactone ring at the ester linkage, generating a free phenylglycine carboxylate and converting the threonyl moiety into 2-amino-butenoic acid. This chain is Virginiamycin B lyase, found in Bacillus licheniformis (strain ATCC 14580 / DSM 13 / JCM 2505 / CCUG 7422 / NBRC 12200 / NCIMB 9375 / NCTC 10341 / NRRL NRS-1264 / Gibson 46).